We begin with the raw amino-acid sequence, 1083 residues long: Error-prone DNA polymerase (1083 aa).

This sequence belongs to the DNA polymerase type-C family. DnaE2 subfamily.

It is found in the cytoplasm. The enzyme catalyses DNA(n) + a 2'-deoxyribonucleoside 5'-triphosphate = DNA(n+1) + diphosphate. In terms of biological role, DNA polymerase involved in damage-induced mutagenesis and translesion synthesis (TLS). It is not the major replicative DNA polymerase. This Xanthomonas oryzae pv. oryzae (strain PXO99A) protein is Error-prone DNA polymerase.